Consider the following 483-residue polypeptide: Isocitrate dehydrogenase [NADP] (483 aa).

Residue Thr74 coordinates NADP(+). D-threo-isocitrate is bound by residues Ser83, Asn85, Arg89, Arg99, and Arg121. A Mg(2+)-binding site is contributed by Asp232. Residues 264–270 and Asn277 each bind NADP(+); that span reads HGSAPDI.

This sequence belongs to the isocitrate and isopropylmalate dehydrogenases family. In terms of assembly, homodimer. Mg(2+) is required as a cofactor. Mn(2+) serves as cofactor.

It catalyses the reaction D-threo-isocitrate + NADP(+) = 2-oxoglutarate + CO2 + NADPH. Its function is as follows. Catalyzes the oxidative decarboxylation of isocitrate to 2-oxoglutarate and carbon dioxide with the concomitant reduction of NADP(+). The polypeptide is Isocitrate dehydrogenase [NADP] (icd) (Rickettsia prowazekii (strain Madrid E)).